The primary structure comprises 118 residues: uncharacterized protein (118 aa).

It localises to the mitochondrion. This is an uncharacterized protein from Arabidopsis thaliana (Mouse-ear cress).